The following is a 528-amino-acid chain: MTQTAEKPFGKLRSFLWPIHMHELKKVLPMFLMFFCISFNYTILRDTKDTLIVTAPGSGAEAIPFIKLWLVVPSAVVFMLIYAKLSNILNKQALFFAVLSPFVVFFALFPVVIYPCRHILHPTAFADTLQSILPSGFMGFIAMLRNWTFAVFYVLSELWGSVMLSLMFWGFANEITKISEAKRFYALFGVGANVALLISGPAIIWSSKLRASLGEGVDPWGVSLYFLMAMFLCSCAIIAACYWWMNRYVLTDPRFYNPAELKAKKSKPKMSMGESFSYLLRSPYMLLLALLVICYGICINLVEVTWKSQLKMQFPNPNDYSAFMGNFSFWTGVVSVFVMLFIGGNVIRRFGWLTGALVTPIMVLVTGAVFFALVIFRDHATGLVAALGTTPLMLAVVVGAIQNILSKSTKYALFDATKEMAYIPLDQEQKVKGKAAIDVVAARFGKSGGSLIQQGLLVVCGSIGAMTPFLAVALFAIIMVWLTSATKLNKLFLAASAAKEQELAEAAAAEKEASSAAKESAPAIEGVS.

The next 12 helical transmembrane spans lie at 24-44 (LKKV…YTIL), 63-83 (IPFI…LIYA), 93-113 (ALFF…PVVI), 124-144 (AFAD…IAML), 149-169 (FAVF…LMFW), 184-204 (FYAL…PAII), 220-240 (WGVS…IIAA), 284-304 (YMLL…LVEV), 327-347 (FSFW…GNVI), 356-376 (ALVT…LVIF), 381-401 (TGLV…VGAI), and 463-483 (IGAM…VWLT).

The protein belongs to the ADP/ATP translocase tlc family.

It is found in the cell membrane. This chain is ADP,ATP carrier protein 1 (tlcA), found in Chlamydia trachomatis serovar D (strain ATCC VR-885 / DSM 19411 / UW-3/Cx).